A 225-amino-acid polypeptide reads, in one-letter code: Probable proteasome subunit beta type-6 (225 aa).

The protein belongs to the peptidase T1B family. As to quaternary structure, the 26S proteasome consists of a 20S proteasome core and two 19S regulatory subunits. The 20S proteasome core is composed of 28 subunits that are arranged in four stacked rings, resulting in a barrel-shaped structure. The two end rings are each formed by seven alpha subunits, and the two central rings are each formed by seven beta subunits. The catalytic chamber with the active sites is on the inside of the barrel.

It localises to the cytoplasm. Its subcellular location is the nucleus. Functionally, non-catalytic component of the proteasome, a multicatalytic proteinase complex which is characterized by its ability to cleave peptides with Arg, Phe, Tyr, Leu, and Glu adjacent to the leaving group at neutral or slightly basic pH. The proteasome has an ATP-dependent proteolytic activity. In Schizosaccharomyces pombe (strain 972 / ATCC 24843) (Fission yeast), this protein is Probable proteasome subunit beta type-6 (pam1).